Here is a 509-residue protein sequence, read N- to C-terminus: ATP synthase subunit alpha (509 aa).

169-176 (GDRQTGKT) contributes to the ATP binding site.

This sequence belongs to the ATPase alpha/beta chains family. As to quaternary structure, F-type ATPases have 2 components, CF(1) - the catalytic core - and CF(0) - the membrane proton channel. CF(1) has five subunits: alpha(3), beta(3), gamma(1), delta(1), epsilon(1). CF(0) has three main subunits: a(1), b(2) and c(9-12). The alpha and beta chains form an alternating ring which encloses part of the gamma chain. CF(1) is attached to CF(0) by a central stalk formed by the gamma and epsilon chains, while a peripheral stalk is formed by the delta and b chains.

The protein resides in the cell inner membrane. The enzyme catalyses ATP + H2O + 4 H(+)(in) = ADP + phosphate + 5 H(+)(out). Its function is as follows. Produces ATP from ADP in the presence of a proton gradient across the membrane. The alpha chain is a regulatory subunit. The polypeptide is ATP synthase subunit alpha (Zymomonas mobilis subsp. mobilis (strain ATCC 31821 / ZM4 / CP4)).